The primary structure comprises 448 residues: Phosphoglucosamine mutase (448 aa).

Residue Ser100 is the Phosphoserine intermediate of the active site. Mg(2+)-binding residues include Ser100, Asp240, Asp242, and Asp244. Ser100 carries the phosphoserine modification.

Belongs to the phosphohexose mutase family. The cofactor is Mg(2+). Activated by phosphorylation.

It catalyses the reaction alpha-D-glucosamine 1-phosphate = D-glucosamine 6-phosphate. In terms of biological role, catalyzes the conversion of glucosamine-6-phosphate to glucosamine-1-phosphate. The polypeptide is Phosphoglucosamine mutase (Bacillus cereus (strain G9842)).